Consider the following 282-residue polypeptide: Probable ribosomal RNA small subunit methyltransferase A (282 aa).

Residues His24, Leu26, Gly51, Glu72, Asp100, and Asn115 each contribute to the S-adenosyl-L-methionine site.

Belongs to the class I-like SAM-binding methyltransferase superfamily. rRNA adenine N(6)-methyltransferase family. RsmA subfamily.

The protein resides in the cytoplasm. Functionally, specifically dimethylates two adjacent adenosines in the loop of a conserved hairpin near the 3'-end of 16S rRNA in the 30S particle. May play a critical role in biogenesis of 30S subunits. The protein is Probable ribosomal RNA small subunit methyltransferase A of Halobacterium salinarum (strain ATCC 29341 / DSM 671 / R1).